A 377-amino-acid polypeptide reads, in one-letter code: Nitric oxide reductase FlRd-NAD(+) reductase (377 aa).

Belongs to the FAD-dependent oxidoreductase family. FAD is required as a cofactor.

Its subcellular location is the cytoplasm. It catalyses the reaction 2 reduced [nitric oxide reductase rubredoxin domain] + NAD(+) + H(+) = 2 oxidized [nitric oxide reductase rubredoxin domain] + NADH. It functions in the pathway nitrogen metabolism; nitric oxide reduction. One of at least two accessory proteins for anaerobic nitric oxide (NO) reductase. Reduces the rubredoxin moiety of NO reductase. This chain is Nitric oxide reductase FlRd-NAD(+) reductase, found in Salmonella paratyphi A (strain AKU_12601).